Here is a 162-residue protein sequence, read N- to C-terminus: uncharacterized protein (162 aa).

The N-terminal stretch at 1–34 (MAREVISTSILMIATVVAVTAAIMVILPAVKDLA) is a signal peptide.

This is an uncharacterized protein from Archaeoglobus fulgidus (strain ATCC 49558 / DSM 4304 / JCM 9628 / NBRC 100126 / VC-16).